The sequence spans 95 residues: uncharacterized protein (95 aa).

This is an uncharacterized protein from Bacillus subtilis (strain 168).